Consider the following 375-residue polypeptide: Succinyl-diaminopimelate desuccinylase (375 aa).

His66 is a binding site for Zn(2+). Asp68 is a catalytic residue. Asp99 is a Zn(2+) binding site. Residue Glu133 is the Proton acceptor of the active site. 3 residues coordinate Zn(2+): Glu134, Glu162, and His348.

It belongs to the peptidase M20A family. DapE subfamily. Homodimer. It depends on Zn(2+) as a cofactor. The cofactor is Co(2+).

The enzyme catalyses N-succinyl-(2S,6S)-2,6-diaminopimelate + H2O = (2S,6S)-2,6-diaminopimelate + succinate. Its pathway is amino-acid biosynthesis; L-lysine biosynthesis via DAP pathway; LL-2,6-diaminopimelate from (S)-tetrahydrodipicolinate (succinylase route): step 3/3. In terms of biological role, catalyzes the hydrolysis of N-succinyl-L,L-diaminopimelic acid (SDAP), forming succinate and LL-2,6-diaminopimelate (DAP), an intermediate involved in the bacterial biosynthesis of lysine and meso-diaminopimelic acid, an essential component of bacterial cell walls. This chain is Succinyl-diaminopimelate desuccinylase, found in Shigella dysenteriae serotype 1 (strain Sd197).